Reading from the N-terminus, the 92-residue chain is Small ribosomal subunit protein uS19 (92 aa).

Belongs to the universal ribosomal protein uS19 family.

In terms of biological role, protein S19 forms a complex with S13 that binds strongly to the 16S ribosomal RNA. This is Small ribosomal subunit protein uS19 from Rickettsia felis (strain ATCC VR-1525 / URRWXCal2) (Rickettsia azadi).